Reading from the N-terminus, the 156-residue chain is ATP synthase subunit b (156 aa).

The helical transmembrane segment at 12 to 32 (VAFFIFVLFCMKFVWPPVIAA) threads the bilayer.

The protein belongs to the ATPase B chain family. As to quaternary structure, F-type ATPases have 2 components, F(1) - the catalytic core - and F(0) - the membrane proton channel. F(1) has five subunits: alpha(3), beta(3), gamma(1), delta(1), epsilon(1). F(0) has three main subunits: a(1), b(2) and c(10-14). The alpha and beta chains form an alternating ring which encloses part of the gamma chain. F(1) is attached to F(0) by a central stalk formed by the gamma and epsilon chains, while a peripheral stalk is formed by the delta and b chains.

It localises to the cell inner membrane. Its function is as follows. F(1)F(0) ATP synthase produces ATP from ADP in the presence of a proton or sodium gradient. F-type ATPases consist of two structural domains, F(1) containing the extramembraneous catalytic core and F(0) containing the membrane proton channel, linked together by a central stalk and a peripheral stalk. During catalysis, ATP synthesis in the catalytic domain of F(1) is coupled via a rotary mechanism of the central stalk subunits to proton translocation. In terms of biological role, component of the F(0) channel, it forms part of the peripheral stalk, linking F(1) to F(0). This chain is ATP synthase subunit b, found in Pseudomonas aeruginosa (strain UCBPP-PA14).